A 1208-amino-acid polypeptide reads, in one-letter code: DNA-directed RNA polymerase subunit beta (1208 aa).

This sequence belongs to the RNA polymerase beta chain family. The RNAP catalytic core consists of 2 alpha, 1 beta, 1 beta' and 1 omega subunit. When a sigma factor is associated with the core the holoenzyme is formed, which can initiate transcription.

The catalysed reaction is RNA(n) + a ribonucleoside 5'-triphosphate = RNA(n+1) + diphosphate. DNA-dependent RNA polymerase catalyzes the transcription of DNA into RNA using the four ribonucleoside triphosphates as substrates. The polypeptide is DNA-directed RNA polymerase subunit beta (Enterococcus faecium (Streptococcus faecium)).